Reading from the N-terminus, the 424-residue chain is Acetyl-CoA acetyltransferase, mitochondrial (424 aa).

A mitochondrion-targeting transit peptide spans 1–30 (MAALAVLHGVVRRPLLRGLLQEVRCLGRSY). Position 63 is an N6-acetyllysine; alternate (lysine 63). Lysine 63 is modified (N6-succinyllysine; alternate). Lysine 75 carries the N6-succinyllysine modification. Cysteine 123 (acyl-thioester intermediate) is an active-site residue. 4 positions are modified to N6-acetyllysine; alternate: lysine 171, lysine 178, lysine 187, and lysine 199. 4 positions are modified to N6-succinyllysine; alternate: lysine 171, lysine 178, lysine 187, and lysine 199. Serine 204 is modified (phosphoserine). Tyrosine 216 contacts CoA. Tyrosine 216 provides a ligand contact to K(+). An N6-acetyllysine; alternate mark is found at lysine 220 and lysine 227. N6-succinyllysine; alternate is present on residues lysine 220 and lysine 227. Lysine 240 is modified (N6-succinyllysine). The residue at position 242 (lysine 242) is an N6-acetyllysine; alternate. At lysine 242 the chain carries N6-succinyllysine; alternate. N6-acetyllysine is present on residues lysine 248 and lysine 254. CoA contacts are provided by residues 255 to 257 (RVD) and lysine 260. At lysine 260 the chain carries N6-acetyllysine; alternate. Lysine 260 carries the post-translational modification N6-succinyllysine; alternate. Residues lysine 263 and lysine 265 each carry the N6-succinyllysine modification. At lysine 270 the chain carries N6-acetyllysine. The K(+) site is built by alanine 277, alanine 278, and alanine 280. Residue serine 281 participates in CoA binding. Lysine 335 is modified (N6-acetyllysine). Valine 378 is a binding site for K(+). Cysteine 410 serves as the catalytic Proton donor/acceptor.

This sequence belongs to the thiolase-like superfamily. Thiolase family. In terms of assembly, homotetramer. In terms of processing, succinylation at Lys-265, adjacent to a coenzyme A binding site. Desuccinylated by SIRT5.

The protein resides in the mitochondrion. It carries out the reaction 2 acetyl-CoA = acetoacetyl-CoA + CoA. The catalysed reaction is propanoyl-CoA + acetyl-CoA = 2-methyl-3-oxobutanoyl-CoA + CoA. It functions in the pathway lipid metabolism; fatty acid beta-oxidation. With respect to regulation, activated by potassium ions, but not sodium ions. Its function is as follows. This is one of the enzymes that catalyzes the last step of the mitochondrial beta-oxidation pathway, an aerobic process breaking down fatty acids into acetyl-CoA. Using free coenzyme A/CoA, catalyzes the thiolytic cleavage of medium- to long-chain 3-oxoacyl-CoAs into acetyl-CoA and a fatty acyl-CoA shortened by two carbon atoms. The activity of the enzyme is reversible and it can also catalyze the condensation of two acetyl-CoA molecules into acetoacetyl-CoA. Thereby, it plays a major role in ketone body metabolism. This is Acetyl-CoA acetyltransferase, mitochondrial (Acat1) from Rattus norvegicus (Rat).